The sequence spans 40 residues: Large ribosomal subunit protein bL36B (40 aa).

It belongs to the bacterial ribosomal protein bL36 family.

This Leifsonia xyli subsp. xyli (strain CTCB07) protein is Large ribosomal subunit protein bL36B.